Consider the following 283-residue polypeptide: Elongation factor Ts (283 aa).

An involved in Mg(2+) ion dislocation from EF-Tu region spans residues 80–83 (TDFV).

The protein belongs to the EF-Ts family.

The protein resides in the cytoplasm. Functionally, associates with the EF-Tu.GDP complex and induces the exchange of GDP to GTP. It remains bound to the aminoacyl-tRNA.EF-Tu.GTP complex up to the GTP hydrolysis stage on the ribosome. This Shigella boydii serotype 18 (strain CDC 3083-94 / BS512) protein is Elongation factor Ts.